A 553-amino-acid chain; its full sequence is Formate--tetrahydrofolate ligase (553 aa).

63–70 (TPAGEGKS) is a binding site for ATP.

This sequence belongs to the formate--tetrahydrofolate ligase family.

It carries out the reaction (6S)-5,6,7,8-tetrahydrofolate + formate + ATP = (6R)-10-formyltetrahydrofolate + ADP + phosphate. It participates in one-carbon metabolism; tetrahydrofolate interconversion. The protein is Formate--tetrahydrofolate ligase of Limosilactobacillus fermentum (strain NBRC 3956 / LMG 18251) (Lactobacillus fermentum).